An 812-amino-acid chain; its full sequence is Valine--tRNA ligase (812 aa).

A 'HIGH' region motif is present at residues 47-57; that stretch reads PTISGQLHIGH. Positions 536–540 match the 'KMSKS' region motif; sequence KMSKS. Lys-539 contacts ATP.

The protein belongs to the class-I aminoacyl-tRNA synthetase family. ValS type 2 subfamily. As to quaternary structure, monomer.

It localises to the cytoplasm. It carries out the reaction tRNA(Val) + L-valine + ATP = L-valyl-tRNA(Val) + AMP + diphosphate. Its function is as follows. Catalyzes the attachment of valine to tRNA(Val). As ValRS can inadvertently accommodate and process structurally similar amino acids such as threonine, to avoid such errors, it has a 'posttransfer' editing activity that hydrolyzes mischarged Thr-tRNA(Val) in a tRNA-dependent manner. The protein is Valine--tRNA ligase of Ehrlichia ruminantium (strain Gardel).